Reading from the N-terminus, the 123-residue chain is UPF0738 protein BCG9842_B4089 (123 aa).

The protein belongs to the UPF0738 family.

This chain is UPF0738 protein BCG9842_B4089, found in Bacillus cereus (strain G9842).